A 408-amino-acid polypeptide reads, in one-letter code: CST complex subunit STN1 (408 aa).

Positions 8 to 195 (MQCESSPKEE…KVYDQPFRNP (188 aa)) are interaction with CTC1. Residues 64 to 165 (VDIMGAVISV…EICATIYYKV (102 aa)) constitute a DNA-binding region (OB). Winged helix-turn-helix (wHTH) regions lie at residues 201–304 (EALN…YVTS) and 305–408 (KDKD…YTAF).

This sequence belongs to the STN1 family. In terms of assembly, component of the CST complex, composed of TEN1/C17orf106, CTC1/C17orf68 and STN1; in the complex interacts directly with TEN1 and CTC1. Interacts with ACD/TPP1, POT1 and POLA1.

Its subcellular location is the nucleus. It localises to the chromosome. It is found in the telomere. Its function is as follows. Component of the CST complex proposed to act as a specialized replication factor promoting DNA replication under conditions of replication stress or natural replication barriers such as the telomere duplex. The CST complex binds single-stranded DNA with high affinity in a sequence-independent manner, while isolated subunits bind DNA with low affinity by themselves. Initially the CST complex has been proposed to protect telomeres from DNA degradation. However, the CST complex has been shown to be involved in several aspects of telomere replication. The CST complex inhibits telomerase and is involved in telomere length homeostasis; it is proposed to bind to newly telomerase-synthesized 3' overhangs and to terminate telomerase action implicating the association with the ACD:POT1 complex thus interfering with its telomerase stimulation activity. The CST complex is also proposed to be involved in fill-in synthesis of the telomeric C-strand probably implicating recruitment and activation of DNA polymerase alpha. The CST complex facilitates recovery from many forms of exogenous DNA damage; seems to be involved in the re-initiation of DNA replication at repaired forks and/or dormant origins. Required for efficicient replication of the duplex region of the telomere. Promotes efficient replication of lagging-strand telomeres. Promotes general replication start following replication-fork stalling implicating new origin firing. May be in involved in C-strand fill-in during late S/G2 phase independent of its role in telomere duplex replication. The protein is CST complex subunit STN1 of Rattus norvegicus (Rat).